Here is a 376-residue protein sequence, read N- to C-terminus: tRNA(Met) cytidine acetate ligase (376 aa).

ATP-binding positions include 7–20, G102, N160, and R181; that span reads IAEYNPFHNGHYYQ.

It belongs to the TmcAL family.

It localises to the cytoplasm. It catalyses the reaction cytidine(34) in elongator tRNA(Met) + acetate + ATP = N(4)-acetylcytidine(34) in elongator tRNA(Met) + AMP + diphosphate. Its function is as follows. Catalyzes the formation of N(4)-acetylcytidine (ac(4)C) at the wobble position of elongator tRNA(Met), using acetate and ATP as substrates. First activates an acetate ion to form acetyladenylate (Ac-AMP) and then transfers the acetyl group to tRNA to form ac(4)C34. The sequence is that of tRNA(Met) cytidine acetate ligase from Exiguobacterium sp. (strain ATCC BAA-1283 / AT1b).